Here is a 304-residue protein sequence, read N- to C-terminus: Porphobilinogen deaminase (304 aa).

An S-(dipyrrolylmethanemethyl)cysteine modification is found at Cys241.

The protein belongs to the HMBS family. Monomer. Dipyrromethane is required as a cofactor.

It catalyses the reaction 4 porphobilinogen + H2O = hydroxymethylbilane + 4 NH4(+). It participates in porphyrin-containing compound metabolism; protoporphyrin-IX biosynthesis; coproporphyrinogen-III from 5-aminolevulinate: step 2/4. Tetrapolymerization of the monopyrrole PBG into the hydroxymethylbilane pre-uroporphyrinogen in several discrete steps. This Ruthia magnifica subsp. Calyptogena magnifica protein is Porphobilinogen deaminase.